A 296-amino-acid chain; its full sequence is Lipoyl synthase (296 aa).

[4Fe-4S] cluster contacts are provided by Cys37, Cys42, Cys48, Cys63, Cys67, Cys70, and Ser276. Residues 49-265 form the Radical SAM core domain; the sequence is WSKKHTTVMI…ERVAKTKGFL (217 aa).

It belongs to the radical SAM superfamily. Lipoyl synthase family. [4Fe-4S] cluster is required as a cofactor.

It localises to the cytoplasm. It carries out the reaction [[Fe-S] cluster scaffold protein carrying a second [4Fe-4S](2+) cluster] + N(6)-octanoyl-L-lysyl-[protein] + 2 oxidized [2Fe-2S]-[ferredoxin] + 2 S-adenosyl-L-methionine + 4 H(+) = [[Fe-S] cluster scaffold protein] + N(6)-[(R)-dihydrolipoyl]-L-lysyl-[protein] + 4 Fe(3+) + 2 hydrogen sulfide + 2 5'-deoxyadenosine + 2 L-methionine + 2 reduced [2Fe-2S]-[ferredoxin]. The protein operates within protein modification; protein lipoylation via endogenous pathway; protein N(6)-(lipoyl)lysine from octanoyl-[acyl-carrier-protein]: step 2/2. Catalyzes the radical-mediated insertion of two sulfur atoms into the C-6 and C-8 positions of the octanoyl moiety bound to the lipoyl domains of lipoate-dependent enzymes, thereby converting the octanoylated domains into lipoylated derivatives. In Rickettsia peacockii (strain Rustic), this protein is Lipoyl synthase.